The sequence spans 126 residues: Histone H2B type 1-B (126 aa).

Over residues 1–12 (MPEPSKSAPAPK) the composition is skewed to low complexity. Positions 1-36 (MPEPSKSAPAPKKGSKKAISKAQKKDGKKRKRSRKE) are disordered. Proline 2 bears the N-acetylproline mark. The residue at position 3 (glutamate 3) is an ADP-ribosyl glutamic acid. At lysine 6 the chain carries N6-(2-hydroxyisobutyryl)lysine; alternate. Lysine 6 is modified (N6-(beta-hydroxybutyryl)lysine; alternate). At lysine 6 the chain carries N6-acetyllysine; alternate. Lysine 6 bears the N6-butyryllysine; alternate mark. Lysine 6 is subject to N6-crotonyllysine; alternate. Position 6 is an N6-lactoyllysine; alternate (lysine 6). Residue lysine 6 forms a Glycyl lysine isopeptide (Lys-Gly) (interchain with G-Cter in SUMO2); alternate linkage. The residue at position 7 (serine 7) is an ADP-ribosylserine. Lysine 12 carries the N6-(beta-hydroxybutyryl)lysine; alternate modification. 2 positions are modified to N6-acetyllysine; alternate: lysine 12 and lysine 13. Residues lysine 12 and lysine 13 each carry the N6-crotonyllysine; alternate modification. At lysine 12 the chain carries N6-lactoyllysine; alternate. Lysine 13 carries the post-translational modification N6-(2-hydroxyisobutyryl)lysine; alternate. Residue serine 15 is modified to Phosphoserine; by STK4/MST1. N6-acetyllysine; alternate is present on residues lysine 16, lysine 17, lysine 21, and lysine 24. 4 positions are modified to N6-crotonyllysine; alternate: lysine 16, lysine 17, lysine 21, and lysine 24. An N6-lactoyllysine; alternate mark is found at lysine 16, lysine 17, lysine 21, and lysine 24. Lysine 17 bears the N6-glutaryllysine; alternate mark. An N6-(2-hydroxyisobutyryl)lysine; alternate mark is found at lysine 21 and lysine 24. Position 21 is an N6-(beta-hydroxybutyryl)lysine; alternate (lysine 21). Lysine 21 bears the N6-butyryllysine; alternate mark. Lysine 21 participates in a covalent cross-link: Glycyl lysine isopeptide (Lys-Gly) (interchain with G-Cter in SUMO2); alternate. Residue lysine 25 is modified to N6-(2-hydroxyisobutyryl)lysine. An N6-(2-hydroxyisobutyryl)lysine; alternate modification is found at lysine 35. The residue at position 35 (lysine 35) is an N6-(beta-hydroxybutyryl)lysine; alternate. Residue lysine 35 is modified to N6-crotonyllysine; alternate. The residue at position 35 (lysine 35) is an N6-glutaryllysine; alternate. Lysine 35 bears the N6-succinyllysine; alternate mark. Lysine 35 participates in a covalent cross-link: Glycyl lysine isopeptide (Lys-Gly) (interchain with G-Cter in ubiquitin); alternate. At glutamate 36 the chain carries PolyADP-ribosyl glutamic acid. Residue serine 37 is modified to Phosphoserine; by AMPK. 3 positions are modified to N6-(2-hydroxyisobutyryl)lysine; alternate: lysine 44, lysine 47, and lysine 58. Lysine 44 carries the post-translational modification N6-lactoyllysine; alternate. Lysine 44 and lysine 47 each carry N6-glutaryllysine; alternate. Residue lysine 47 is modified to N6-methyllysine; alternate. At lysine 58 the chain carries N6,N6-dimethyllysine; alternate. The residue at position 80 (arginine 80) is a Dimethylated arginine. An N6-(2-hydroxyisobutyryl)lysine; alternate modification is found at lysine 86. Lysine 86 carries the post-translational modification N6-acetyllysine; alternate. Position 86 is an N6-lactoyllysine; alternate (lysine 86). The residue at position 86 (lysine 86) is an N6,N6,N6-trimethyllysine; alternate. 2 positions are modified to omega-N-methylarginine: arginine 87 and arginine 93. Lysine 109 carries the N6-(2-hydroxyisobutyryl)lysine; alternate modification. Lysine 109 bears the N6-(beta-hydroxybutyryl)lysine; alternate mark. Lysine 109 bears the N6-lactoyllysine; alternate mark. An N6-glutaryllysine; alternate modification is found at lysine 109. At lysine 109 the chain carries N6-methyllysine; alternate. A glycan (O-linked (GlcNAc) serine) is linked at serine 113. At threonine 116 the chain carries Phosphothreonine. N6-(2-hydroxyisobutyryl)lysine; alternate occurs at positions 117 and 121. At lysine 117 the chain carries N6-(beta-hydroxybutyryl)lysine; alternate. An N6-lactoyllysine; alternate mark is found at lysine 117 and lysine 121. An N6-glutaryllysine; alternate mark is found at lysine 117 and lysine 121. 2 positions are modified to N6-succinyllysine; alternate: lysine 117 and lysine 121. Lysine 117 bears the N6-methylated lysine; alternate mark. A Glycyl lysine isopeptide (Lys-Gly) (interchain with G-Cter in ubiquitin); alternate cross-link involves residue lysine 121.

This sequence belongs to the histone H2B family. In terms of assembly, the nucleosome is a histone octamer containing two molecules each of H2A, H2B, H3 and H4 assembled in one H3-H4 heterotetramer and two H2A-H2B heterodimers. The octamer wraps approximately 147 bp of DNA. Monoubiquitination at Lys-35 (H2BK34Ub) by the MSL1/MSL2 dimer is required for histone H3 'Lys-4' (H3K4me) and 'Lys-79' (H3K79me) methylation and transcription activation at specific gene loci, such as HOXA9 and MEIS1 loci. Similarly, monoubiquitination at Lys-121 (H2BK120Ub) by the RNF20/40 complex gives a specific tag for epigenetic transcriptional activation and is also prerequisite for histone H3 'Lys-4' and 'Lys-79' methylation. It also functions cooperatively with the FACT dimer to stimulate elongation by RNA polymerase II. H2BK120Ub also acts as a regulator of mRNA splicing: deubiquitination by USP49 is required for efficient cotranscriptional splicing of a large set of exons. Post-translationally, phosphorylated on Ser-15 (H2BS14ph) by STK4/MST1 during apoptosis; which facilitates apoptotic chromatin condensation. Also phosphorylated on Ser-15 in response to DNA double strand breaks (DSBs), and in correlation with somatic hypermutation and immunoglobulin class-switch recombination. Phosphorylation at Ser-37 (H2BS36ph) by AMPK in response to stress promotes transcription. In terms of processing, glcNAcylation at Ser-113 promotes monoubiquitination of Lys-121. It fluctuates in response to extracellular glucose, and associates with transcribed genes. ADP-ribosylated by PARP1 or PARP2 on Ser-7 (H2BS6ADPr) in response to DNA damage. H2BS6ADPr promotes recruitment of CHD1L. Mono-ADP-ribosylated on Glu-3 (H2BE2ADPr) by PARP3 in response to single-strand breaks. Poly ADP-ribosylation on Glu-36 (H2BE35ADPr) by PARP1 regulates adipogenesis: it inhibits phosphorylation at Ser-37 (H2BS36ph), thereby blocking expression of pro-adipogenetic genes. Post-translationally, hydroxybutyrylation of histones is induced by starvation. In terms of processing, crotonylation (Kcr) is specifically present in male germ cells and marks testis-specific genes in post-meiotic cells, including X-linked genes that escape sex chromosome inactivation in haploid cells. Crotonylation marks active promoters and enhancers and confers resistance to transcriptional repressors. It is also associated with post-meiotically activated genes on autosomes. Lactylated in macrophages by EP300/P300 by using lactoyl-CoA directly derived from endogenous or exogenous lactate, leading to stimulates gene transcription.

The protein resides in the nucleus. Its subcellular location is the chromosome. Functionally, core component of nucleosome. Nucleosomes wrap and compact DNA into chromatin, limiting DNA accessibility to the cellular machineries which require DNA as a template. Histones thereby play a central role in transcription regulation, DNA repair, DNA replication and chromosomal stability. DNA accessibility is regulated via a complex set of post-translational modifications of histones, also called histone code, and nucleosome remodeling. This is Histone H2B type 1-B from Mus musculus (Mouse).